A 613-amino-acid chain; its full sequence is Dihydroxy-acid dehydratase (613 aa).

Position 81 (D81) interacts with Mg(2+). Residue C122 participates in [2Fe-2S] cluster binding. Residues D123 and K124 each contribute to the Mg(2+) site. N6-carboxylysine is present on K124. C195 is a [2Fe-2S] cluster binding site. E491 is a Mg(2+) binding site. S517 serves as the catalytic Proton acceptor.

Belongs to the IlvD/Edd family. Homodimer. [2Fe-2S] cluster serves as cofactor. The cofactor is Mg(2+).

The catalysed reaction is (2R)-2,3-dihydroxy-3-methylbutanoate = 3-methyl-2-oxobutanoate + H2O. The enzyme catalyses (2R,3R)-2,3-dihydroxy-3-methylpentanoate = (S)-3-methyl-2-oxopentanoate + H2O. Its pathway is amino-acid biosynthesis; L-isoleucine biosynthesis; L-isoleucine from 2-oxobutanoate: step 3/4. It participates in amino-acid biosynthesis; L-valine biosynthesis; L-valine from pyruvate: step 3/4. Functions in the biosynthesis of branched-chain amino acids. Catalyzes the dehydration of (2R,3R)-2,3-dihydroxy-3-methylpentanoate (2,3-dihydroxy-3-methylvalerate) into 2-oxo-3-methylpentanoate (2-oxo-3-methylvalerate) and of (2R)-2,3-dihydroxy-3-methylbutanoate (2,3-dihydroxyisovalerate) into 2-oxo-3-methylbutanoate (2-oxoisovalerate), the penultimate precursor to L-isoleucine and L-valine, respectively. The polypeptide is Dihydroxy-acid dehydratase (Vibrio vulnificus (strain YJ016)).